The following is a 369-amino-acid chain: MELSEIKRNIDKYNQDLTQIRGSLDLENKETNIQEYEEMMAEPNFWDNQTKAQDIIDKNNALKAIVNGYKTLQAEVDDMDATWDLLQEEFDGEMKEDLEQEVINFKAKVDEYELQLLLDGPHDANNAILELHPGAGGTESQDWANMLFRMYQRYCEKKGFKVKTVDYLPGDEAGIKSVTLLIKGHNAYGYLKAEKGVHRLVRISPFDSSGRRHTSFASCDVIPDFNNDEIEIEINPDDITVDTFRASGAGGQHINKTESAIRITHHPSGIVVNNQNERSQIKNREAAMKMLKSKLYQLKLEEQAREMAEIRGEQKEIGWGSQIRSYVFHPYSMVKDHRTNEETGKVDAVMDGDIGPFIESYLRQTMSHD.

Position 252 is an N5-methylglutamine (glutamine 252).

It belongs to the prokaryotic/mitochondrial release factor family. In terms of processing, methylated by PrmC. Methylation increases the termination efficiency of RF2.

The protein localises to the cytoplasm. Its function is as follows. Peptide chain release factor 2 directs the termination of translation in response to the peptide chain termination codons UGA and UAA. This chain is Peptide chain release factor 2, found in Staphylococcus aureus (strain MRSA252).